The following is a 188-amino-acid chain: Pyridoxal 5'-phosphate synthase subunit PdxT (188 aa).

Glycine 47–serine 49 provides a ligand contact to L-glutamine. The active-site Nucleophile is the cysteine 79. Residues arginine 105 and isoleucine 134–arginine 135 each bind L-glutamine. Residues histidine 170 and glutamate 172 each act as charge relay system in the active site.

It belongs to the glutaminase PdxT/SNO family. As to quaternary structure, in the presence of PdxS, forms a dodecamer of heterodimers. Only shows activity in the heterodimer.

It carries out the reaction aldehydo-D-ribose 5-phosphate + D-glyceraldehyde 3-phosphate + L-glutamine = pyridoxal 5'-phosphate + L-glutamate + phosphate + 3 H2O + H(+). The catalysed reaction is L-glutamine + H2O = L-glutamate + NH4(+). It functions in the pathway cofactor biosynthesis; pyridoxal 5'-phosphate biosynthesis. Catalyzes the hydrolysis of glutamine to glutamate and ammonia as part of the biosynthesis of pyridoxal 5'-phosphate. The resulting ammonia molecule is channeled to the active site of PdxS. The polypeptide is Pyridoxal 5'-phosphate synthase subunit PdxT (Listeria monocytogenes serotype 4b (strain F2365)).